Consider the following 394-residue polypeptide: Aspergillopepsin-1 (394 aa).

The first 20 residues, 1-20 (MVVFSKTAALVLGLSTAVSA), serve as a signal peptide directing secretion. Positions 21–69 (APAPTRKGFTINQIARPANKTRTVNLPGLYARSLAKFGGTVPQSVKEAA) are cleaved as a propeptide — activation peptide. The Peptidase A1 domain maps to 85-391 (YLTPVTVGKS…NSEGPKLGFA (307 aa)). The active site involves aspartate 101. O-linked (Man...) serine glycans are attached at residues serine 129 and serine 304. Residues cysteine 319 and cysteine 354 are joined by a disulfide bond.

This sequence belongs to the peptidase A1 family. In terms of assembly, monomer.

Its subcellular location is the secreted. It carries out the reaction Hydrolysis of proteins with broad specificity. Generally favors hydrophobic residues in P1 and P1', but also accepts Lys in P1, which leads to activation of trypsinogen. Does not clot milk.. In terms of biological role, secreted aspartic endopeptidase that allows assimilation of proteinaceous substrates. The scissile peptide bond is attacked by a nucleophilic water molecule activated by two aspartic residues in the active site. Shows a broad primary substrate specificity. Favors hydrophobic residues at the P1 and P1' positions, but also accepts a lysine residue in the P1 position, leading to the activation of trypsinogen and chymotrypsinogen A. The sequence is that of Aspergillopepsin-1 (pepA) from Aspergillus phoenicis (Aspergillus saitoi).